The following is a 472-amino-acid chain: tRNA-2-methylthio-N(6)-dimethylallyladenosine synthase (472 aa).

A disordered region spans residues 1–24 (MTGTPDVFPPATPGGTPLVALPAG). The region spanning 33–150 (GKLYIKTHGC…LPELIRARRE (118 aa)) is the MTTase N-terminal domain. Positions 42, 79, 113, 187, 191, and 194 each coordinate [4Fe-4S] cluster. In terms of domain architecture, Radical SAM core spans 173–407 (RADGASAFVS…RINAHAAGIS (235 aa)). Residues 408-471 (EKMVGTVQTV…TNSLRARVVA (64 aa)) enclose the TRAM domain.

This sequence belongs to the methylthiotransferase family. MiaB subfamily. Monomer. Requires [4Fe-4S] cluster as cofactor.

The protein localises to the cytoplasm. It catalyses the reaction N(6)-dimethylallyladenosine(37) in tRNA + (sulfur carrier)-SH + AH2 + 2 S-adenosyl-L-methionine = 2-methylsulfanyl-N(6)-dimethylallyladenosine(37) in tRNA + (sulfur carrier)-H + 5'-deoxyadenosine + L-methionine + A + S-adenosyl-L-homocysteine + 2 H(+). Functionally, catalyzes the methylthiolation of N6-(dimethylallyl)adenosine (i(6)A), leading to the formation of 2-methylthio-N6-(dimethylallyl)adenosine (ms(2)i(6)A) at position 37 in tRNAs that read codons beginning with uridine. The polypeptide is tRNA-2-methylthio-N(6)-dimethylallyladenosine synthase (Stenotrophomonas maltophilia (strain R551-3)).